The sequence spans 126 residues: Glycine cleavage system H protein (126 aa).

The Lipoyl-binding domain occupies 22–104 (VATIGITEYA…YEKAWMVKIE (83 aa)). Lys-63 is subject to N6-lipoyllysine.

The protein belongs to the GcvH family. As to quaternary structure, the glycine cleavage system is composed of four proteins: P, T, L and H. Requires (R)-lipoate as cofactor.

In terms of biological role, the glycine cleavage system catalyzes the degradation of glycine. The H protein shuttles the methylamine group of glycine from the P protein to the T protein. Functionally, is also involved in protein lipoylation via its role as an octanoyl/lipoyl carrier protein intermediate. This chain is Glycine cleavage system H protein, found in Staphylococcus epidermidis (strain ATCC 35984 / DSM 28319 / BCRC 17069 / CCUG 31568 / BM 3577 / RP62A).